The chain runs to 578 residues: Zinc finger protein with KRAB and SCAN domains 8 (578 aa).

The interval M1–E20 is disordered. S12 carries the phosphoserine modification. Residue K26 forms a Glycyl lysine isopeptide (Lys-Gly) (interchain with G-Cter in SUMO2) linkage. An SCAN box domain is found at R51–I133. The disordered stretch occupies residues A158 to Q205. Over residues N165–Q205 the composition is skewed to polar residues. Residues K176 and K199 each participate in a glycyl lysine isopeptide (Lys-Gly) (interchain with G-Cter in SUMO2) cross-link. Residue S201 is modified to Phosphoserine. Positions E220–P316 constitute a KRAB domain. Glycyl lysine isopeptide (Lys-Gly) (interchain with G-Cter in SUMO2) cross-links involve residues K221, K272, and K288. 2 C2H2-type zinc fingers span residues H322–H344 and Y350–H372. Glycyl lysine isopeptide (Lys-Gly) (interchain with G-Cter in SUMO2) cross-links involve residues K374 and K376. 7 C2H2-type zinc fingers span residues Y378–H400, Y406–H428, Y434–H456, Y462–H484, Y490–H512, Y518–H540, and Y546–H568. Residues K413 and K441 each participate in a glycyl lysine isopeptide (Lys-Gly) (interchain with G-Cter in SUMO2) cross-link. Residue K502 forms a Glycyl lysine isopeptide (Lys-Gly) (interchain with G-Cter in SUMO2) linkage. A Glycyl lysine isopeptide (Lys-Gly) (interchain with G-Cter in SUMO2) cross-link involves residue K572.

Belongs to the krueppel C2H2-type zinc-finger protein family.

The protein localises to the nucleus. May be involved in transcriptional regulation. This is Zinc finger protein with KRAB and SCAN domains 8 (ZKSCAN8) from Pan paniscus (Pygmy chimpanzee).